The chain runs to 640 residues: MLRNQSVGNGVSKQASAKAATFSTINSTLAADDMFKRNFVSYLPLNNEDNDILFPSIKTIKFIEMLHGKKEFFKGQSIHSVLRDSAVFKKQMFYTLSHTLLNSISIQQINAEWQRHLKAFPFRSKGMSFQEYFNIWYYAIKQVILEGILQTINYILQNLDNDIYNKYIDWICTIGITPIVTLPKNKVTLTPLAKSISSRLIQEIIRNKQNFLLHILTQISSTSIADFTNINIYRNKSDGNITCLSNNKELEYFVYSAPYFINNQLLFTTPLAHLYSELNKHENLHRHRKMCQLLNTFPIKVLTTSKNSVDNKKILELIEREEKTSDAKKSLIKFLLNLSDSKSKIGITDSIEGFLQDITPSIIDQNKLLISKGNLQRRGQDNNDRDIRDIFKKQIIKCMEEQIQSQLDEIETLKTANRLFENKIKDMHSLINLSETSKHDFTLDSDIESLSLAKALNKVQSLPFTSVSIDDTRAVANSFFSQYIPDIEYADKKIDQLWETEYTRTFRLRKNVNNQGQEDSISYSNYTLELLLIPFMKHVLKLRHFELLPEEFLFLSLKEIMLAVYSNCKIKHYLRLIYIRQINELSHLIHTQKQSDLTLTPDLGSTNPEDFQYPQDDVASKLKRIRNSRHIQYIKRPEYL.

The protein belongs to the herpesviridae portal protein family. Homododecamerizes. Interacts with terminase subunits TRM1 and TRM3.

Its subcellular location is the virion. The protein localises to the host nucleus. Forms a portal in the viral capsid through which viral DNA is translocated during DNA packaging. Assembles as a dodecamer at a single fivefold axe of the T=16 icosahedric capsid. Binds to the molecular motor that translocates the viral DNA, termed terminase. This Human herpesvirus 7 (strain JI) (HHV-7) protein is Portal protein (U76).